A 619-amino-acid chain; its full sequence is E3 ubiquitin-protein ligase complex SLX5-SLX8 subunit SLX5 (619 aa).

Positions 1-23 are disordered; sequence MHSDTNGRTKSNNSPSDNNPNET. Low complexity predominate over residues 11-21; that stretch reads SNNSPSDNNPN. Residues serine 14 and serine 29 each carry the phosphoserine modification. A disordered region spans residues 63–90; sequence VRSDSRSRNSQRTHITASSERPDFQANN. The segment covering 70–90 has biased composition (polar residues); sequence RNSQRTHITASSERPDFQANN. The interval 201–335 is EUC1 interaction domain; it reads SRRQLLRRSA…ALFTEFRNQL (135 aa).

As to quaternary structure, component of the heterodimeric SUMO-targeted ubiquitin ligase (STUbL) complex composed of SLX5 and SLX8. Interacts with sirtuin SIR2. Interacts with KAR9. Interacts with EUC1.

The protein resides in the nucleus. It localises to the chromosome. It is found in the centromere. The protein localises to the kinetochore. It catalyses the reaction S-ubiquitinyl-[E2 ubiquitin-conjugating enzyme]-L-cysteine + [acceptor protein]-L-lysine = [E2 ubiquitin-conjugating enzyme]-L-cysteine + N(6)-ubiquitinyl-[acceptor protein]-L-lysine.. It functions in the pathway protein modification; protein ubiquitination. Its function is as follows. Component of the SUMO-targeted ubiquitin ligase (STUbL) complex SLX5/SLX8 that mediates ubiquitination and subsequent desumoylation of sumoylated proteins and proteins containing SUMO-like domains for their degradation. The STUbL complex SLX5/SLX8 stimulates ubiquitin conjugating enzymes, including UBC1, UBC4, UBC5 and UBC13-MMS2, and mediates the proteolytic down-regulation of sumoylated proteins. The STUbL complex SLX5/SLX8 is involved in ubiquitin-mediated degradation of histone variant CSE4, preventing mislocalization to euchromatin. The complex plays an essential role in maintenance of chromosome stability and links SUMO-dependent ubiquitination to a centromere-specific function during mitosis. The complex is involved in proteolysis of spindle positioning protein KAR9 and ensures correct spindle function by regulating levels of microtubule-associated proteins. During replication, the complex helps prevent DNA lesions via recombination and has a role in localizing the DNA damage protein DCD2. The complex especially ubiquitinates the nuclease YEN1 and prevents persistent accumulation of a fraction of YEN1 associated with sites of activity in late G2/M and helps maintain the balance between pro- and anti-crossover pathways during homologous recombination. It is also involved in ubiquitin-mediated degradation of DNA repair proteins RAD52 and RAD57. Along with SIR2, promotes silencing of genes at telomeric or ribosomal DNA (rDNA) loci. Finally, the complex is recruited to distinct genomic hotspots of non-H2B protein ubiquitination (ub-hotspots) by the sumoylated transcription factor-like protein EUC1 where it ubiquitinates EUC1 and presumably other targets. In Saccharomyces cerevisiae (strain ATCC 204508 / S288c) (Baker's yeast), this protein is E3 ubiquitin-protein ligase complex SLX5-SLX8 subunit SLX5 (SLX5).